Reading from the N-terminus, the 448-residue chain is N-succinylarginine dihydrolase (448 aa).

Substrate is bound by residues 19 to 28, Asn-110, and 137 to 138; these read GGLSYGNVAS and HR. Glu-174 is a catalytic residue. Arg-214 is a substrate binding site. Residue His-250 is part of the active site. Substrate-binding residues include Asp-252 and Asn-365. Catalysis depends on Cys-371, which acts as the Nucleophile.

This sequence belongs to the succinylarginine dihydrolase family. As to quaternary structure, homodimer.

The enzyme catalyses N(2)-succinyl-L-arginine + 2 H2O + 2 H(+) = N(2)-succinyl-L-ornithine + 2 NH4(+) + CO2. It participates in amino-acid degradation; L-arginine degradation via AST pathway; L-glutamate and succinate from L-arginine: step 2/5. Functionally, catalyzes the hydrolysis of N(2)-succinylarginine into N(2)-succinylornithine, ammonia and CO(2). In Pseudomonas fluorescens (strain ATCC BAA-477 / NRRL B-23932 / Pf-5), this protein is N-succinylarginine dihydrolase.